A 1828-amino-acid chain; its full sequence is Chromodomain-helicase-DNA-binding protein 2 (1828 aa).

Residues 1–14 show a composition bias toward basic and acidic residues; the sequence is MMRNKDKSQEEDSS. The segment at 1-243 is disordered; the sequence is MMRNKDKSQE…EDDDFETDSD (243 aa). Residues 15 to 75 show a composition bias toward low complexity; it reads LHSNASSHSA…SESESAGSKS (61 aa). Composition is skewed to basic and acidic residues over residues 81–101, 115–128, and 146–155; these read EAKEKPASKKERIADVKKMWE, SRQEPSRFNIKEEA, and KKQEKWKQEP. Residues 175 to 204 show a composition bias toward basic residues; it reads VKARRPVPRRTVPKPRVKKQPKTQRGKRKK. A phosphoserine mark is found at Ser207 and Ser208. The span at 234 to 243 shows a compositional bias: acidic residues; the sequence is EDDDFETDSD. Thr240 is modified (phosphothreonine). Phosphoserine is present on Ser242. 2 Chromo domains span residues 261–353 and 378–456; these read ETIE…QWLG and QIVE…IPTR. Residues 496–666 enclose the Helicase ATP-binding domain; sequence AHSWCKNNSV…WSLLHFIMPE (171 aa). 509–516 serves as a coordination point for ATP; sequence DEMGLGKT. The DEAH box motif lies at 617–620; the sequence is DEAH. The Helicase C-terminal domain occupies 795–946; that stretch reads LLDKLLTRLR…HLVIQRMDTT (152 aa). Disordered stretches follow at residues 1030–1124, 1331–1462, 1556–1638, and 1680–1828; these read EDEE…RSVR, VTGG…DEDD, HKKR…ADRG, and HMDA…VRKT. The segment covering 1037–1065 has biased composition (basic and acidic residues); the sequence is ERPHKDWDEIIPEEQRKKVEEEERQKELE. Residues Ser1085, Ser1087, Ser1365, and Ser1386 each carry the phosphoserine modification. Positions 1347–1371 are enriched in basic and acidic residues; sequence KKENKVPRLKEEHGIELSSPRHSDN. Basic and acidic residues-rich tracts occupy residues 1396 to 1431 and 1565 to 1574; these read ENKENKEKQMSSRKDKEGDKERKKSKDKKEKPKSGD and EQKKKDDVTG. A CHD1 helical C-terminal domain (CHCT) region spans residues 1464–1566; the sequence is LDQETFSICK…KKRSQEEEEQ (103 aa). The span at 1584-1601 shows a compositional bias: polar residues; it reads SGSSRDSLISQSHTSHNL. Composition is skewed to basic and acidic residues over residues 1698–1720, 1739–1749, 1760–1772, and 1795–1814; these read RPYDQYSSDRDHRGHRDYYDRHH, QDFRRMSDHRP, DHYRSFHTDKLGE, and SPHDSKSPLDHRSPLERSLE. Ser1807 bears the Phosphoserine mark.

This sequence belongs to the SNF2/RAD54 helicase family. In terms of assembly, interacts with MYOD1. Interacts with histone H3.3.

The protein localises to the nucleus. The catalysed reaction is ATP + H2O = ADP + phosphate + H(+). ATP-dependent chromatin-remodeling factor that specifically binds to the promoter of target genes, leading to chromatin remodeling, possibly by promoting deposition of histone H3.3. Involved in myogenesis via interaction with MYOD1: binds to myogenic gene regulatory sequences and mediates incorporation of histone H3.3 prior to the onset of myogenic gene expression, promoting their expression. This is Chromodomain-helicase-DNA-binding protein 2 (CHD2) from Homo sapiens (Human).